A 1378-amino-acid polypeptide reads, in one-letter code: S-cell enriched with leucine-rich repeat-containing protein slrA (1378 aa).

Residues 17-37 traverse the membrane as a helical segment; that stretch reads IFKILYCYLFTSLLLILSTWV. Asn-59, Asn-112, Asn-143, Asn-172, and Asn-201 each carry an N-linked (GlcNAc...) asparagine glycan. LRR repeat units lie at residues 143-165, 167-188, 191-212, 213-235, 236-257, 260-281, 282-304, 307-329, and 331-353; these read NLTG…LPYL, HLRN…GLLK, SLVA…ADSK, AISY…WKTP, NLLF…EFFR, SLDY…LSKS, RISY…TCWK, SLRI…IFDH, and PLQY…LDCA. N-linked (GlcNAc...) asparagine glycosylation is found at Asn-265, Asn-287, and Asn-296. N-linked (GlcNAc...) asparagine glycans are attached at residues Asn-416, Asn-436, Asn-451, Asn-491, Asn-513, Asn-596, Asn-605, Asn-634, Asn-704, Asn-710, Asn-740, Asn-741, Asn-771, Asn-788, Asn-801, Asn-826, Asn-843, Asn-861, Asn-875, and Asn-907. A coiled-coil region spans residues 886–946; it reads SLNNNNNNNN…NNNENNNENK (61 aa). Residues 891-909 show a composition bias toward low complexity; the sequence is NNNNNNNNNKNNNNNNNDS. The disordered stretch occupies residues 891–945; that stretch reads NNNNNNNNNKNNNNNNNDSNNEKEVVEDEEEDLDYSSQNDNNNINNNNNENNNEN. Residues 915–924 show a composition bias toward acidic residues; that stretch reads VVEDEEEDLD. The span at 929 to 945 shows a compositional bias: low complexity; it reads NDNNNINNNNNENNNEN. N-linked (GlcNAc...) asparagine glycosylation is found at Asn-953, Asn-970, Asn-1090, and Asn-1100. A helical transmembrane segment spans residues 1160–1180; sequence YYIVFFGCASGLILVLVICIV. A compositionally biased stretch (low complexity) spans 1227–1276; that stretch reads DLNNNNNNNNNNNNNNNNNNNNNNNNNNNNNNNNNFNDGSDTFNNNNKKN. The segment at 1227 to 1378 is disordered; the sequence is DLNNNNNNNN…KKHLTIINKK (152 aa). Over residues 1289-1304 the composition is skewed to basic and acidic residues; that stretch reads DGKENDIKNINNKKDE. Positions 1305–1324 are enriched in acidic residues; that stretch reads KEDDGDDDDDEDDDEYEDDT. Low complexity predominate over residues 1328–1353; that stretch reads SSGNSSRSKGSDGGSSSNSLSSDKQS. 2 N-linked (GlcNAc...) asparagine glycosylation sites follow: Asn-1331 and Asn-1360. Positions 1354-1364 are enriched in polar residues; it reads FNNGNENNSII. The span at 1368 to 1378 shows a compositional bias: basic residues; the sequence is KKKHLTIINKK.

It is found in the membrane. The polypeptide is S-cell enriched with leucine-rich repeat-containing protein slrA (slrA) (Dictyostelium discoideum (Social amoeba)).